We begin with the raw amino-acid sequence, 116 residues long: UPF0654 protein C869.09 (116 aa).

The segment at 32-116 (LKEHGSESHY…LLEEVDDESK (85 aa)) is disordered. Over residues 39–48 (SHYTTGTTRG) the composition is skewed to polar residues. A compositionally biased stretch (basic and acidic residues) spans 49–64 (QKADADDAGELREEGF).

It belongs to the UPF0654 (con-6) family.

It localises to the cytoplasm. Its subcellular location is the nucleus. The chain is UPF0654 protein C869.09 from Schizosaccharomyces pombe (strain 972 / ATCC 24843) (Fission yeast).